Here is a 309-residue protein sequence, read N- to C-terminus: Glycine-rich RNA-binding protein 3, mitochondrial (309 aa).

A mitochondrion-targeting transit peptide spans 1 to 37; it reads MAFLSKFGNILKQTTNKQLNAQVSLSSPSLFQAIRCM. The 79-residue stretch at 40-118 folds into the RRM domain; it reads SKLFIGGMAY…RVVKVNYAND (79 aa). A disordered region spans residues 247 to 309; sequence FAGDSQFGGS…GEFEDVAKRA (63 aa). Positions 258–273 are enriched in polar residues; it reads VGNSSQFGGDNTQFTA.

It belongs to the GR-RBP family. As to quaternary structure, homodimer. Interacts with ORRM2 and MORF8/RIP1. Interacts with RBG5/ORRM4. Binds to RBG2/ORRM5.

It localises to the mitochondrion. Its function is as follows. Possibly has a role in RNA transcription or processing during stress. Involved in C-to-U editing of mitochondrial RNA. Functions as a minor mitochondrial editing factor. Controls 6 percent of the mitochondrial editing sites. The protein is Glycine-rich RNA-binding protein 3, mitochondrial of Arabidopsis thaliana (Mouse-ear cress).